Here is a 338-residue protein sequence, read N- to C-terminus: uncharacterized protein (338 aa).

This is an uncharacterized protein from Acidianus filamentous virus 2 (isolate Italy/Pozzuoli) (AFV-2).